A 217-amino-acid polypeptide reads, in one-letter code: Oxygen regulatory protein NreC (217 aa).

One can recognise a Response regulatory domain in the interval 2–119 (KIVIADDHAV…QLLLAVRTVY (118 aa)). Asp-53 carries the 4-aspartylphosphate modification. Residues 148–213 (TNDPFKILSK…ELVEYALKKK (66 aa)) enclose the HTH luxR-type domain. Positions 172–191 (NKDIAEKLFVSVKTVEAHKT) form a DNA-binding region, H-T-H motif.

In terms of processing, phosphorylated by NreB.

Its subcellular location is the cytoplasm. Member of the two-component regulatory system NreB/NreC involved in the control of dissimilatory nitrate/nitrite reduction in response to oxygen. Phosphorylated NreC binds to a GC-rich palindromic sequence at the promoters of the nitrate (narGHJI) and nitrite (nir) reductase operons, as well as the putative nitrate transporter gene narT, and activates their expression. In Staphylococcus haemolyticus (strain JCSC1435), this protein is Oxygen regulatory protein NreC (nreC).